Consider the following 197-residue polypeptide: Peptide deformylase (197 aa).

Fe cation is bound by residues C106 and H148. E149 is a catalytic residue. Residue H152 coordinates Fe cation.

It belongs to the polypeptide deformylase family. The cofactor is Fe(2+).

It carries out the reaction N-terminal N-formyl-L-methionyl-[peptide] + H2O = N-terminal L-methionyl-[peptide] + formate. In terms of biological role, removes the formyl group from the N-terminal Met of newly synthesized proteins. Requires at least a dipeptide for an efficient rate of reaction. N-terminal L-methionine is a prerequisite for activity but the enzyme has broad specificity at other positions. The polypeptide is Peptide deformylase (Mycolicibacterium smegmatis (strain ATCC 700084 / mc(2)155) (Mycobacterium smegmatis)).